The chain runs to 373 residues: Dual-specificity RNA methyltransferase RlmN (373 aa).

Catalysis depends on Glu94, which acts as the Proton acceptor. One can recognise a Radical SAM core domain in the interval Glu100–Asp339. An intrachain disulfide couples Cys107 to Cys344. [4Fe-4S] cluster contacts are provided by Cys114, Cys118, and Cys121. S-adenosyl-L-methionine-binding positions include Gly168 to Glu169, Ser200, Ser222 to His224, and Asn301. Cys344 acts as the S-methylcysteine intermediate in catalysis.

The protein belongs to the radical SAM superfamily. RlmN family. It depends on [4Fe-4S] cluster as a cofactor.

It is found in the cytoplasm. The enzyme catalyses adenosine(2503) in 23S rRNA + 2 reduced [2Fe-2S]-[ferredoxin] + 2 S-adenosyl-L-methionine = 2-methyladenosine(2503) in 23S rRNA + 5'-deoxyadenosine + L-methionine + 2 oxidized [2Fe-2S]-[ferredoxin] + S-adenosyl-L-homocysteine. It carries out the reaction adenosine(37) in tRNA + 2 reduced [2Fe-2S]-[ferredoxin] + 2 S-adenosyl-L-methionine = 2-methyladenosine(37) in tRNA + 5'-deoxyadenosine + L-methionine + 2 oxidized [2Fe-2S]-[ferredoxin] + S-adenosyl-L-homocysteine. Specifically methylates position 2 of adenine 2503 in 23S rRNA and position 2 of adenine 37 in tRNAs. m2A2503 modification seems to play a crucial role in the proofreading step occurring at the peptidyl transferase center and thus would serve to optimize ribosomal fidelity. In Tolumonas auensis (strain DSM 9187 / NBRC 110442 / TA 4), this protein is Dual-specificity RNA methyltransferase RlmN.